We begin with the raw amino-acid sequence, 199 residues long: Recombination protein RecR (199 aa).

Residues 56–71 form a C4-type zinc finger; it reads CSICFNWSAEDPCEIC. In terms of domain architecture, Toprim spans 79–174; sequence STWCVVADVK…GLRMTRLAFG (96 aa).

Belongs to the RecR family.

Functionally, may play a role in DNA repair. It seems to be involved in an RecBC-independent recombinational process of DNA repair. It may act with RecF and RecO. This chain is Recombination protein RecR, found in Synechococcus sp. (strain JA-3-3Ab) (Cyanobacteria bacterium Yellowstone A-Prime).